A 929-amino-acid polypeptide reads, in one-letter code: MGNSSGWRGPAGQRRMLFLFLLSLLDQALSEPIRYAIPEELDRGSLVGNLAKDLGFGVGDLPTRNLRVIAEKKFFTVSPENGNLLVSDRIDREEICGKKSTCVLEFEMVAEKPLNFFHVTVLIQDINDNPPTFSQNITELEISELALTGATFALESAQDPDVGVNSLQQYYLSPDPHFSLIQKENLDGSRYPELVLKAPLDREEQPHHHLVLTAVDGGEPSRSCTTQIRVIVADANDNPPVFTQDMYRVNVAENLPAGSSVLKVMAIDMDEGINAEIIYAFINIGKEVRQLFKLDSKTGELTTIGELDFEERDSYTIGVEAKDGGHHTAYCKVQIDISDENDNAPEITLASESQHIQEDAELGTAVALIKTHDLDSGFNGEILCQLKGNFPFKIVQDTKNTYRLVTDGALDREQIPEYNVTITATDKGNPPLSSSKTITLHILDVNDNVPVFHQASYTVHVAENNPPGASIAHVRASDPDLGPNGLVSYYIVASDLEPRELSSYVSVSARSGVVFAQRAFDHEQLRAFELTLQARDQGSPTLSANVSLRVLVDDRNDNAPLVLYPALGPEGSALFDMVPRSAEPGYLVTKVVAVDADSGYNAWLSYHIVQASEPGLFSLGLRTGEVRTARTLGDREAARQRLLVTVRDGGQQPLSATVMLHLIFADSLQEIQPDLSDRPTPSDPQAELQFHLVVALALISVLFLLAVILAISLRLRCSSRPATEGYFQPGVCFKTVPGVLPTYSERTLPYSYNPCAASHSSNTEFKFLNIKAENAAPQDLLCDEASWFESNDNPEMPSNSGNLQKQAPPNTDWRFSQAQRPGTSGSQNGDDTGTWPNNQFDTEMLQAMILASASEAADGSSTLGGGAGTMGLSARYGPQFTLQHVPDYRQNVYIPGSNATLTNAAGKRDGKAPAGGNGNKKKSGKKEKK.

The first 30 residues, 1-30, serve as a signal peptide directing secretion; sequence MGNSSGWRGPAGQRRMLFLFLLSLLDQALS. Cadherin domains follow at residues 31 to 133, 134 to 242, 243 to 347, 348 to 452, 453 to 562, and 570 to 675; these read EPIR…PPTF, SQNI…PPVF, TQDM…APEI, TLAS…VPVF, HQAS…APLV, and EGSA…QPDL. Residues 31–691 lie on the Extracellular side of the membrane; sequence EPIRYAIPEE…SDPQAELQFH (661 aa). N136 carries an N-linked (GlcNAc...) asparagine glycan. N-linked (GlcNAc...) asparagine glycans are attached at residues N419 and N545. Residues 692 to 712 traverse the membrane as a helical segment; that stretch reads LVVALALISVLFLLAVILAIS. Residues 713 to 929 lie on the Cytoplasmic side of the membrane; sequence LRLRCSSRPA…KKKSGKKEKK (217 aa). Disordered stretches follow at residues 791–838 and 899–929; these read NDNP…WPNN and ATLT…KEKK. Over residues 919-929 the composition is skewed to basic residues; it reads NKKKSGKKEKK.

The protein resides in the cell membrane. Its function is as follows. Potential calcium-dependent cell-adhesion protein. May be involved in the establishment and maintenance of specific neuronal connections in the brain. This Homo sapiens (Human) protein is Protocadherin gamma-B3 (PCDHGB3).